Reading from the N-terminus, the 971-residue chain is Piwi-like protein 2 (971 aa).

The residue at position 45 (arginine 45) is a Symmetric dimethylarginine. Arginine 74 bears the Omega-N-methylarginine; by PRMT5; alternate mark. The residue at position 74 (arginine 74) is a Symmetric dimethylarginine; by PRMT5; alternate. Arginine 83 carries the omega-N-methylarginine; alternate modification. Symmetric dimethylarginine; alternate occurs at positions 83 and 95. Arginine 95 bears the Omega-N-methylarginine; by PRMT5; alternate mark. Residue arginine 100 is modified to Symmetric dimethylarginine; by PRMT5; alternate. The residue at position 100 (arginine 100) is an Omega-N-methylarginine; alternate. Residues 102 to 124 form a disordered region; that stretch reads LSANMVRKDREEPRSSLPDPSVL. A symmetric dimethylarginine mark is found at arginine 144 and arginine 156. Residues 159-200 are disordered; sequence SSIGRGMDKPPSAFGLTARDPPRLPQPPALSPTSLHSADPPP. Arginine 163 is modified (symmetric dimethylarginine; by PRMT5). Positions 387–500 constitute a PAZ domain; sequence SVLDVMHAIY…LLPELSFMTG (114 aa). A Symmetric dimethylarginine; by PRMT5 modification is found at arginine 549. A Piwi domain is found at 666–957; it reads MVVCIIMGTR…LAFLSGQILH (292 aa). Active-site residues include aspartate 743, glutamate 781, aspartate 813, and histidine 946.

This sequence belongs to the argonaute family. Piwi subfamily. Interacts with DDX4, MAEL, EIF3A, EIF4E, EIF4G, PRMT5 and WDR77. Associates with EIF4E- and EIF4G-containing m7G cap-binding complexes. Interacts (when methylated on arginine residues) with TDRD1 and TDRKH/TDRD2. Interacts with TDRD12. Component of the PET complex, at least composed of EXD1, PIWIL2, TDRD12 and piRNAs. Interacts with MOV10L1. Interacts with GPAT2. Interacts with Tex19.1 and, probably, Tex19.2. Interacts (via PIWI domain) with BMAL1 and CLOCK. Interacts with GSK3B. Interacts with TEX15. The cofactor is Mg(2+). In terms of processing, arginine methylation by PRMT5 is required for the interaction with Tudor domain-containing protein TDRD1 and subsequent localization to the meiotic nuage, also named P granule. In terms of tissue distribution, expressed in adult testis, specifically in spermatocytes and in spermatogonia. Only detected in primordial germ cells of both sexes. Widely expressed in tumors. Also present at early stages of oocyte growth. Present in the mitotic spermatogonia. Not detected in the first stages of meiosis (preleptotene and leptotene). Detected at the late zygotene stage and increases throughout pachytene, declining from this stage onward until expression stops at the early round spermatid stage (at protein level).

It is found in the cytoplasm. Functionally, endoribonuclease that plays a central role during spermatogenesis by repressing transposable elements and preventing their mobilization, which is essential for the germline integrity. Plays an essential role in meiotic differentiation of spermatocytes, germ cell differentiation and in self-renewal of spermatogonial stem cells. Its presence in oocytes suggests that it may participate in similar functions during oogenesis in females. Acts via the piRNA metabolic process, which mediates the repression of transposable elements during meiosis by forming complexes composed of piRNAs and Piwi proteins and govern the methylation and subsequent repression of transposons. During piRNA biosynthesis, plays a key role in the piRNA amplification loop, also named ping-pong amplification cycle, by acting as a 'slicer-competent' piRNA endoribonuclease that cleaves primary piRNAs, which are then loaded onto 'slicer-incompetent' PIWIL4. PIWIL2 slicing produces a pre-miRNA intermediate, which is then processed in mature piRNAs, and as well as a 16 nucleotide by-product that is degraded. Required for PIWIL4/MIWI2 nuclear localization and association with secondary piRNAs antisense. Besides their function in transposable elements repression, piRNAs are probably involved in other processes during meiosis such as translation regulation. Indirectly modulates expression of genes such as PDGFRB, SLC2A1, ITGA6, GJA7, THY1, CD9 and STRA8. Represses circadian rhythms by promoting the stability and activity of core clock components BMAL1 and CLOCK by inhibiting GSK3B-mediated phosphorylation and ubiquitination-dependent degradation of these proteins. This is Piwi-like protein 2 from Mus musculus (Mouse).